The sequence spans 461 residues: UDP-glucose 6-dehydrogenase TuaD (461 aa).

Residues 3 to 20, valine 12, aspartate 31, lysine 36, threonine 122, and glutamate 156 each bind NAD(+); that span reads KIAV…GTCF. Substrate is bound by residues 152–156, lysine 205, asparagine 209, 250–254, and glycine 258; these read EFLRE and FLKAG. The Nucleophile role is filled by cysteine 261. Residue lysine 264 coordinates NAD(+). Lysine 321 contacts substrate. An NAD(+)-binding site is contributed by arginine 328.

It belongs to the UDP-glucose/GDP-mannose dehydrogenase family. Phosphorylated by YwqD and dephosphorylated by YwqE in vitro.

It localises to the cytoplasm. It carries out the reaction UDP-alpha-D-glucose + 2 NAD(+) + H2O = UDP-alpha-D-glucuronate + 2 NADH + 3 H(+). The protein operates within nucleotide-sugar biosynthesis; UDP-alpha-D-glucuronate biosynthesis; UDP-alpha-D-glucuronate from UDP-alpha-D-glucose: step 1/1. Activated by phosphorylation; inhibited by dephosphorylation. Functionally, catalyzes the conversion of UDP-glucose into UDP-glucuronate, one of the precursors of teichuronic acid. The protein is UDP-glucose 6-dehydrogenase TuaD (tuaD) of Bacillus subtilis (strain 168).